Reading from the N-terminus, the 296-residue chain is Nucleotide-binding protein SSA_0810 (296 aa).

Residue 13–20 (GMSGAGKT) coordinates ATP. 63–66 (DMRS) contacts GTP. The interval 277–296 (WPVNSSHRDKNRRKETVNRS) is disordered. Residues 282–296 (SHRDKNRRKETVNRS) are compositionally biased toward basic and acidic residues.

It belongs to the RapZ-like family.

Functionally, displays ATPase and GTPase activities. In Streptococcus sanguinis (strain SK36), this protein is Nucleotide-binding protein SSA_0810.